A 245-amino-acid polypeptide reads, in one-letter code: Exosome complex component RRP41 (245 aa).

Position 2 is an N-acetylalanine (alanine 2).

It belongs to the RNase PH family. Component of the RNA exosome core complex (Exo-9), composed of EXOSC1, EXOSC2, EXOSC3, EXOSC4, EXOSC5, EXOSC6, EXOSC7, EXOSC8 and EXOSC9; within the complex interacts with EXOSC2, EXOSC7 and EXOSC9. The catalytically inactive RNA exosome core complex (Exo-9) associates with the catalytic subunit EXOSC10/RRP6. Exo-9 may associate with DIS3 to form the nucleolar exosome complex, or DIS3L to form the cytoplasmic exosome complex. Exo-9 is formed by a hexameric base ring consisting of the heterodimers EXOSC4-EXOSC9, EXOSC5-EXOSC8 and EXOSC6-EXOSC7, and a cap ring consisting of EXOSC1, EXOSC2 and EXOSC3. The RNA exosome complex associates with cofactors C1D/RRP47, MPHOSPH6/MPP6 and MTREX/MTR4. Interacts with DDX60. Interacts with DIS3; the interaction is direct.

It localises to the cytoplasm. The protein localises to the nucleus. Its subcellular location is the nucleolus. It is found in the nucleoplasm. Functionally, non-catalytic component of the RNA exosome complex which has 3'-&gt;5' exoribonuclease activity and participates in a multitude of cellular RNA processing and degradation events. In the nucleus, the RNA exosome complex is involved in proper maturation of stable RNA species such as rRNA, snRNA and snoRNA, in the elimination of RNA processing by-products and non-coding 'pervasive' transcripts, such as antisense RNA species and promoter-upstream transcripts (PROMPTs), and of mRNAs with processing defects, thereby limiting or excluding their export to the cytoplasm. The RNA exosome may be involved in Ig class switch recombination (CSR) and/or Ig variable region somatic hypermutation (SHM) by targeting AICDA deamination activity to transcribed dsDNA substrates. In the cytoplasm, the RNA exosome complex is involved in general mRNA turnover and specifically degrades inherently unstable mRNAs containing AU-rich elements (AREs) within their 3' untranslated regions, and in RNA surveillance pathways, preventing translation of aberrant mRNAs. It seems to be involved in degradation of histone mRNA. The catalytic inactive RNA exosome core complex of 9 subunits (Exo-9) is proposed to play a pivotal role in the binding and presentation of RNA for ribonucleolysis, and to serve as a scaffold for the association with catalytic subunits and accessory proteins or complexes. EXOSC4 binds to ARE-containing RNAs. The protein is Exosome complex component RRP41 (EXOSC4) of Bos taurus (Bovine).